Consider the following 411-residue polypeptide: Alpha-galactosidase (411 aa).

Residues M1 to G24 form the signal peptide. A propeptide spanning residues G25 to L47 is cleaved from the precursor. A glycan (N-linked (GlcNAc...) asparagine) is linked at N32. A disulfide bridge connects residues C68 and C100. Residue N145 is glycosylated (N-linked (GlcNAc...) asparagine). Residues C148 and C179 are joined by a disulfide bond. The Nucleophile role is filled by D177. E210–E214 is a substrate binding site. Residue D232 is the Proton donor of the active site. N352 is a glycosylation site (N-linked (GlcNAc...) asparagine).

This sequence belongs to the glycosyl hydrolase 27 family.

It carries out the reaction Hydrolysis of terminal, non-reducing alpha-D-galactose residues in alpha-D-galactosides, including galactose oligosaccharides, galactomannans and galactolipids.. Involved in the hydrolysis of the galactomannan, it splits alpha-linked galactose moieties. It is particularly suitable for the hydrolysis of guar gum to a gum with improved gelling properties. Preferentially cleaves alpha-1,6 glycoside linkages. The protein is Alpha-galactosidase of Cyamopsis tetragonoloba (Guar).